The chain runs to 288 residues: Chemotaxis protein methyltransferase 2 (288 aa).

The CheR-type methyltransferase domain maps to 1-280 (MNEIVITDTD…TGYYKPHKGK (280 aa)). S-adenosyl-L-methionine-binding positions include asparagine 76, threonine 78, arginine 82, glutamate 119, aspartate 145, 200–201 (NL), and 219–220 (RN).

The enzyme catalyses L-glutamyl-[protein] + S-adenosyl-L-methionine = [protein]-L-glutamate 5-O-methyl ester + S-adenosyl-L-homocysteine. Functionally, methylation of the membrane-bound methyl-accepting chemotaxis proteins (MCP) to form gamma-glutamyl methyl ester residues in MCP. The polypeptide is Chemotaxis protein methyltransferase 2 (cheR2) (Vibrio cholerae serotype O1 (strain ATCC 39315 / El Tor Inaba N16961)).